A 209-amino-acid chain; its full sequence is Ribosome maturation factor RimP (209 aa).

It belongs to the RimP family.

The protein localises to the cytoplasm. In terms of biological role, required for maturation of 30S ribosomal subunits. The polypeptide is Ribosome maturation factor RimP (Bartonella bacilliformis (strain ATCC 35685 / KC583 / Herrer 020/F12,63)).